Here is a 227-residue protein sequence, read N- to C-terminus: PKHD-type hydroxylase ACIAD0531 (227 aa).

A Fe2OG dioxygenase domain is found at H78–S178. Fe cation contacts are provided by H96, D98, and H159. R169 provides a ligand contact to 2-oxoglutarate.

Fe(2+) is required as a cofactor. It depends on L-ascorbate as a cofactor.

This chain is PKHD-type hydroxylase ACIAD0531, found in Acinetobacter baylyi (strain ATCC 33305 / BD413 / ADP1).